Consider the following 880-residue polypeptide: Interference hedgehog (880 aa).

The signal sequence occupies residues 1-20 (MTLLTSSLLLFSLLTSRLEA). Over 21 to 703 (IPVLEKSPAH…ETFNMSPMLT (683 aa)) the chain is Extracellular. Ig-like C2-type domains lie at 45–142 (PGVR…TARL), 132–232 (PLVV…ERIQ), 252–340 (PHLL…YIKV), and 346–432 (PQIV…LQVN). Cystine bridges form between Cys-68–Cys-126, Cys-173–Cys-220, Cys-276–Cys-324, and Cys-367–Cys-414. N-linked (GlcNAc...) asparagine glycosylation is found at Asn-102 and Asn-209. The segment at 426–467 (GTLLQVNPKQIQEPRESGGTHRPKPNQGSKQKQMYPPTPPNV) is disordered. 2 consecutive Fibronectin type-III domains span residues 461-567 (PPTP…LQPG) and 575-670 (VPEL…TQRP). N-linked (GlcNAc...) asparagine glycosylation occurs at Asn-466. Positions 497, 501, 503, and 541 each coordinate heparin. A glycan (N-linked (GlcNAc...) asparagine) is linked at Asn-557. The tract at residues 662–697 (LKQGRTQRPKTSTTEEPTLQMGDRDTTTPSHNETFN) is disordered. Polar residues-rich tracts occupy residues 665-678 (GRTQ…TEEP) and 688-697 (TTPSHNETFN). Asn-693 is a glycosylation site (N-linked (GlcNAc...) asparagine). The chain crosses the membrane as a helical span at residues 704–724 (GTIGGGAVLILLLISTCLCVC). Residues 725–880 (RRRTSRSRGN…SSGSLNSVGV (156 aa)) lie on the Cytoplasmic side of the membrane. 2 disordered regions span residues 728 to 762 (TSRS…QRQR) and 775 to 880 (QQQQ…SVGV). 2 stretches are compositionally biased toward low complexity: residues 823 to 837 (RAGG…NNNN) and 864 to 880 (SSRS…SVGV).

It belongs to the immunoglobulin superfamily. IHOG family. As to quaternary structure, homodimer. Heterotetramer; 2 iHog chains bind 2 hh chains when facilitated by heparin, heparin is required to promote high-affinity interactions between hh and iHog.

It is found in the membrane. Mediates response to the active Hedgehog (Hh) protein signal in embryos, functioning upstream or at the level of patched (ptc). This is Interference hedgehog from Drosophila sechellia (Fruit fly).